A 317-amino-acid polypeptide reads, in one-letter code: Malate dehydrogenase (317 aa).

Residues 13-18 (GAGNIG) and D38 each bind NAD(+). Substrate contacts are provided by R87 and R93. NAD(+) is bound by residues N100 and 123–125 (VTN). Substrate is bound by residues N125 and R156. Catalysis depends on H180, which acts as the Proton acceptor.

The protein belongs to the LDH/MDH superfamily. MDH type 3 family.

The catalysed reaction is (S)-malate + NAD(+) = oxaloacetate + NADH + H(+). Catalyzes the reversible oxidation of malate to oxaloacetate. The protein is Malate dehydrogenase of Anaplasma marginale (strain St. Maries).